We begin with the raw amino-acid sequence, 362 residues long: NAD(P)H-quinone oxidoreductase subunit 1, chloroplastic (362 aa).

Helical transmembrane passes span 29 to 49 (ILPI…IVWL), 103 to 123 (IAVI…HFVL), 128 to 148 (IGVF…LMAG), 164 to 184 (AAQS…ISLL), 202 to 222 (FFGW…ISSL), 247 to 267 (YSGI…LVSS), 303 to 323 (TMGI…SITI), and 342 to 362 (FLLP…LVSL).

It belongs to the complex I subunit 1 family. As to quaternary structure, NDH is composed of at least 16 different subunits, 5 of which are encoded in the nucleus.

The protein resides in the plastid. It is found in the chloroplast thylakoid membrane. The enzyme catalyses a plastoquinone + NADH + (n+1) H(+)(in) = a plastoquinol + NAD(+) + n H(+)(out). It carries out the reaction a plastoquinone + NADPH + (n+1) H(+)(in) = a plastoquinol + NADP(+) + n H(+)(out). Functionally, NDH shuttles electrons from NAD(P)H:plastoquinone, via FMN and iron-sulfur (Fe-S) centers, to quinones in the photosynthetic chain and possibly in a chloroplast respiratory chain. The immediate electron acceptor for the enzyme in this species is believed to be plastoquinone. Couples the redox reaction to proton translocation, and thus conserves the redox energy in a proton gradient. This is NAD(P)H-quinone oxidoreductase subunit 1, chloroplastic from Hordeum vulgare (Barley).